The sequence spans 318 residues: Methionine import ATP-binding protein MetN (318 aa).

The 236-residue stretch at 2–237 (IEIKDVGKIF…PEGELKKIIE (236 aa)) folds into the ABC transporter domain. 34–41 (GRSGAGKS) is an ATP binding site.

It belongs to the ABC transporter superfamily. Methionine importer (TC 3.A.1.24) family. As to quaternary structure, the complex is composed of two ATP-binding proteins (MetN), two transmembrane proteins (MetI) and a solute-binding protein (MetQ).

The protein localises to the cell membrane. It catalyses the reaction L-methionine(out) + ATP + H2O = L-methionine(in) + ADP + phosphate + H(+). The catalysed reaction is D-methionine(out) + ATP + H2O = D-methionine(in) + ADP + phosphate + H(+). Its function is as follows. Part of the ABC transporter complex MetNIQ involved in methionine import. Responsible for energy coupling to the transport system. The polypeptide is Methionine import ATP-binding protein MetN (Clostridium tetani (strain Massachusetts / E88)).